A 337-amino-acid chain; its full sequence is Arylacetonitrilase (337 aa).

The CN hydrolase domain maps to 7-278 (VRVAVTQHEP…EGFVYADLDL (272 aa)). Glutamate 47 (proton acceptor) is an active-site residue. Lysine 127 is a catalytic residue. The Nucleophile role is filled by cysteine 162. The interval 311–337 (QHRPEGQADNAAYGLDVPSGLVEEEGA) is disordered.

It belongs to the carbon-nitrogen hydrolase superfamily. Nitrilase family.

It carries out the reaction a nitrile + 2 H2O = a carboxylate + NH4(+). The enzyme catalyses 4-chlorophenylacetonitrile + 2 H2O = 4-chlorophenylacetate + NH4(+). Its function is as follows. Nitrilase that hydrolyzes preferentially phenylacetonitrile, but also (R,S)-mandelonitrile, and 2-phenylpropionitrile. The protein is Arylacetonitrilase of Aspergillus niger (strain ATCC MYA-4892 / CBS 513.88 / FGSC A1513).